A 938-amino-acid chain; its full sequence is Isoleucine--tRNA ligase (938 aa).

The 'HIGH' region motif lies at 58–68; that stretch reads PYANGNIHLGH. L-isoleucyl-5'-AMP is bound at residue E562. A 'KMSKS' region motif is present at residues 603-607; it reads KMSKS. K606 is an ATP binding site. Residues C901, C904, C921, and C924 each contribute to the Zn(2+) site.

It belongs to the class-I aminoacyl-tRNA synthetase family. IleS type 1 subfamily. In terms of assembly, monomer. The cofactor is Zn(2+).

The protein resides in the cytoplasm. The catalysed reaction is tRNA(Ile) + L-isoleucine + ATP = L-isoleucyl-tRNA(Ile) + AMP + diphosphate. Its function is as follows. Catalyzes the attachment of isoleucine to tRNA(Ile). As IleRS can inadvertently accommodate and process structurally similar amino acids such as valine, to avoid such errors it has two additional distinct tRNA(Ile)-dependent editing activities. One activity is designated as 'pretransfer' editing and involves the hydrolysis of activated Val-AMP. The other activity is designated 'posttransfer' editing and involves deacylation of mischarged Val-tRNA(Ile). In Glaesserella parasuis serovar 5 (strain SH0165) (Haemophilus parasuis), this protein is Isoleucine--tRNA ligase.